A 159-amino-acid polypeptide reads, in one-letter code: uncharacterized protein (159 aa).

Positions 9 to 36 (VTSGNKEKKKKRSSAGLTGHAPPAADSS) are disordered.

This is an uncharacterized protein from Caenorhabditis elegans.